We begin with the raw amino-acid sequence, 89 residues long: Small ribosomal subunit protein uS15 (89 aa).

The tract at residues Met-1 to Ala-25 is disordered. The segment covering Lys-8 to Ala-25 has biased composition (polar residues).

It belongs to the universal ribosomal protein uS15 family. Part of the 30S ribosomal subunit. Forms a bridge to the 50S subunit in the 70S ribosome, contacting the 23S rRNA.

In terms of biological role, one of the primary rRNA binding proteins, it binds directly to 16S rRNA where it helps nucleate assembly of the platform of the 30S subunit by binding and bridging several RNA helices of the 16S rRNA. Functionally, forms an intersubunit bridge (bridge B4) with the 23S rRNA of the 50S subunit in the ribosome. In Synechococcus sp. (strain CC9605), this protein is Small ribosomal subunit protein uS15.